Here is a 342-residue protein sequence, read N- to C-terminus: GTPase Obg (342 aa).

The Obg domain occupies 1–159 (MKFLDEAKVY…MWIWLRLKLI (159 aa)). An OBG-type G domain is found at 160–327 (ADAGLVGLPN…ALRALQTEID (168 aa)). Residues 166-173 (GLPNAGKS), 191-195 (FTTLH), 212-215 (DIPG), 279-282 (SKAD), and 308-310 (SSA) each bind GTP. 2 residues coordinate Mg(2+): S173 and T193.

This sequence belongs to the TRAFAC class OBG-HflX-like GTPase superfamily. OBG GTPase family. In terms of assembly, monomer. Mg(2+) is required as a cofactor.

It is found in the cytoplasm. Functionally, an essential GTPase which binds GTP, GDP and possibly (p)ppGpp with moderate affinity, with high nucleotide exchange rates and a fairly low GTP hydrolysis rate. Plays a role in control of the cell cycle, stress response, ribosome biogenesis and in those bacteria that undergo differentiation, in morphogenesis control. The sequence is that of GTPase Obg from Methylobacterium radiotolerans (strain ATCC 27329 / DSM 1819 / JCM 2831 / NBRC 15690 / NCIMB 10815 / 0-1).